A 760-amino-acid chain; its full sequence is Armadillo-like helical domain-containing protein 4 (760 aa).

The signal sequence occupies residues 1-27; sequence MSRPIVLHICLAFCSLLLLNFAAQCLA. At 28-700 the chain is on the extracellular side; it reads FPNLERREIV…KDKAGYMSGM (673 aa). Disordered stretches follow at residues 49–69, 117–143, 216–243, 373–392, 474–495, and 536–652; these read LNTDDLENDSVTSNTPVSGDP, GEEVFGSSQPERMSPESRPSKATLTNP, RTEKFEANPEHKTTSFPGSKLTAGTEPS, HGGERASDQSSVTPTSPMGD, TRGEDETKGGRELPSATVDAPR, and NEEL…SQEP. N-linked (GlcNAc...) asparagine glycosylation occurs at Asn-56. The segment covering 216–228 has biased composition (basic and acidic residues); that stretch reads RTEKFEANPEHKT. Polar residues predominate over residues 380–390; it reads DQSSVTPTSPM. Over residues 474–484 the composition is skewed to basic and acidic residues; it reads TRGEDETKGGR. The span at 594–635 shows a compositional bias: acidic residues; that stretch reads LESEEGEDDEDEEDEEEEDEEEEDEEEDEEDKDADSLDEALG. Residues 701-721 traverse the membrane as a helical segment; that stretch reads LVPVGVGIAGALFILGALYSI. Residues 722–760 lie on the Cytoplasmic side of the membrane; the sequence is KVMNRRRRNGFKRHKRKQREFNSMQDRVMLLADSSEDEF. Residues Ser-755 and Ser-756 each carry the phosphoserine modification.

In terms of assembly, interacts with IL6ST; this interaction prevents IL6ST protein homodimerization and bridges ARMH4 with IL6R and STAT3 and therefore inhibits phosphorylation of STAT3 at 'Tyr-705'. Interacts (via cytoplasmic tail) with RICTOR; this interaction bridges ARMH4 to the mTORC2 complex and inhibits the mTORC2 kinase activity.

It localises to the membrane. Its function is as follows. May modulate immune response and may play a role in inflammation. Down-modulates STAT3 signaling throught direct interaction with IL6ST, resulting in the inhibition of phosphorylation of STAT3 at Tyr-705. May negatively regulates AKT signaling by modulating the activity of mTORC2 complex through RICTOR interaction. The chain is Armadillo-like helical domain-containing protein 4 from Bos taurus (Bovine).